The primary structure comprises 1129 residues: Egg-laying defective protein 27 (1129 aa).

Positions 1–11 (MSRFDSQCSSE) are enriched in polar residues. The tract at residues 1-43 (MSRFDSQCSSEDVNKEDECVPSSSEDSQDGVSSPMENDDEPEF) is disordered. Low complexity predominate over residues 22-33 (SSSEDSQDGVSS). Residues 87–223 (TLYRLRDSVF…QDSTKLASTH (137 aa)) enclose the BAH domain. The region spanning 224–327 (YAIRVGTSFQ…DALSELNAND (104 aa)) is the ELM2 domain. Residues 332–384 (TDVDNMTQDDAKKFAKGIKQLGKNFSRIHRELLPHHSREQLVSYYYLWKKTPE) form the SANT domain. Positions 388 to 434 (PKQAARRVNPTSIKRPTKEKVKASRPTSTEYLDFDSASESDVENNGP) are disordered. The span at 419 to 429 (LDFDSASESDV) shows a compositional bias: acidic residues. Residues 439 to 485 (CHHCYGAESKDWHHANGLLLCTDCRLHYKKYGQLRQIANRPSQVPAC) form a GATA-type; atypical zinc finger. Disordered stretches follow at residues 488 to 636 (KRSN…DPMP), 693 to 717 (RDET…SPED), 790 to 814 (QQNQ…QQAQ), 899 to 950 (MIAE…HAAA), and 982 to 1040 (MAAQ…REHA). 2 stretches are compositionally biased toward polar residues: residues 525-545 (PSTV…TKKL) and 561-573 (VINN…SSEE). Acidic residues-rich tracts occupy residues 613-634 (SYDD…DDDP) and 705-717 (KDDE…SPED). The segment covering 899 to 914 (MIAEQQQQQRHAAAQQ) has biased composition (low complexity). The segment covering 915 to 932 (LREREQREQRERERERQH) has biased composition (basic and acidic residues). Low complexity-rich tracts occupy residues 933–950 (QQQA…HAAA) and 983–999 (AAQQ…AQAQ). A compositionally biased stretch (basic and acidic residues) spans 1000–1040 (RDQERERREREAREREAAREREREQAAREAAARDQAAREHA).

Interacts with ceh-6, sem-4 and sox-2. Interacts with wdr-5.1. Expression detected in anterior intestine and head region.

It is found in the nucleus. Its function is as follows. Transcription factor which promotes stress survival and delays aging. Required for cell cycle progression and development of the mesodermal and endodermal embryonic lineages. Required for normal T-cell polarity, for correct migration of QL neuroblast descendants and other cells, for embryonic patterning and for the embryonic expression of hlh-8. Also required for the transdifferentiation of the Y rectal epithelial cell to the PDA motor neuron during larval development. This is Egg-laying defective protein 27 from Caenorhabditis elegans.